A 555-amino-acid chain; its full sequence is F-box protein COS111 (555 aa).

Disordered stretches follow at residues 31–82 (MSVS…SVSN) and 124–147 (DHSI…KQHH). Residues 32-42 (SVSSRSSQEES) are compositionally biased toward low complexity. The span at 48–61 (ESVSSLSMQEQQTE) shows a compositional bias: polar residues. The span at 129–142 (SGVTRSTVSTVRPT) shows a compositional bias: low complexity. One can recognise an F-box domain in the interval 196–246 (HKDLNSLPHEIMSKIVSHLDQRDVTMCLYVNKNMYSTAVRQLYKEPFFSST). Over residues 327 to 346 (SSSSLSCSRTSSNSNSSTES) the composition is skewed to low complexity. A disordered region spans residues 327-354 (SSSSLSCSRTSSNSNSSTESKPVKKRRS).

In terms of biological role, F-box protein probably involved in ubiquitin conjugation pathway. The chain is F-box protein COS111 (COS111) from Yarrowia lipolytica (strain CLIB 122 / E 150) (Yeast).